We begin with the raw amino-acid sequence, 251 residues long: Imidazole glycerol phosphate synthase subunit HisF (251 aa).

Catalysis depends on residues D11 and D130.

Belongs to the HisA/HisF family. In terms of assembly, heterodimer of HisH and HisF.

The protein localises to the cytoplasm. The enzyme catalyses 5-[(5-phospho-1-deoxy-D-ribulos-1-ylimino)methylamino]-1-(5-phospho-beta-D-ribosyl)imidazole-4-carboxamide + L-glutamine = D-erythro-1-(imidazol-4-yl)glycerol 3-phosphate + 5-amino-1-(5-phospho-beta-D-ribosyl)imidazole-4-carboxamide + L-glutamate + H(+). The protein operates within amino-acid biosynthesis; L-histidine biosynthesis; L-histidine from 5-phospho-alpha-D-ribose 1-diphosphate: step 5/9. In terms of biological role, IGPS catalyzes the conversion of PRFAR and glutamine to IGP, AICAR and glutamate. The HisF subunit catalyzes the cyclization activity that produces IGP and AICAR from PRFAR using the ammonia provided by the HisH subunit. The sequence is that of Imidazole glycerol phosphate synthase subunit HisF from Chloroherpeton thalassium (strain ATCC 35110 / GB-78).